The primary structure comprises 100 residues: MTERFQSRLADVIRRPLITEKATRALELNQYTFEVDHRAAKPDIKAAIEQLFDVKVTGISTMNPPRRSRRMGRFAGKRAQVKKAVVRLAEGNSIQLFPES.

It belongs to the universal ribosomal protein uL23 family. As to quaternary structure, part of the 50S ribosomal subunit. Contacts protein L29, and trigger factor when it is bound to the ribosome.

In terms of biological role, one of the early assembly proteins it binds 23S rRNA. One of the proteins that surrounds the polypeptide exit tunnel on the outside of the ribosome. Forms the main docking site for trigger factor binding to the ribosome. This is Large ribosomal subunit protein uL23 from Synechococcus sp. (strain CC9902).